The chain runs to 204 residues: Large ribosomal subunit protein bL9 (204 aa).

Positions 180–204 (DDIGGAASDDEGDAPAAAADEEESK) are disordered. Residues 187–204 (SDDEGDAPAAAADEEESK) show a composition bias toward acidic residues.

Belongs to the bacterial ribosomal protein bL9 family.

In terms of biological role, binds to the 23S rRNA. This Ruegeria sp. (strain TM1040) (Silicibacter sp.) protein is Large ribosomal subunit protein bL9.